The chain runs to 347 residues: FK506-binding protein-like (347 aa).

Residues 1-24 (METSPISPMNEKNTAQPQQREENA) are disordered. Residue T3 is modified to Phosphothreonine. 3 TPR repeats span residues 208–241 (AKEE…LLTL), 250–283 (TTLY…EPGH), and 284–317 (LKAL…DPKN).

Forms a ternary complex with CDKN1A/p21 and HSP90AB1/Hsp90.

May be involved in response to X-ray. Regulates p21 protein stability by binding to Hsp90 and p21. The chain is FK506-binding protein-like (Fkbpl) from Mus musculus (Mouse).